A 294-amino-acid polypeptide reads, in one-letter code: UDP-3-O-acyl-N-acetylglucosamine deacetylase (294 aa).

Zn(2+)-binding residues include histidine 75, histidine 232, and aspartate 236. Histidine 259 (proton donor) is an active-site residue.

The protein belongs to the LpxC family. It depends on Zn(2+) as a cofactor.

The enzyme catalyses a UDP-3-O-[(3R)-3-hydroxyacyl]-N-acetyl-alpha-D-glucosamine + H2O = a UDP-3-O-[(3R)-3-hydroxyacyl]-alpha-D-glucosamine + acetate. It functions in the pathway glycolipid biosynthesis; lipid IV(A) biosynthesis; lipid IV(A) from (3R)-3-hydroxytetradecanoyl-[acyl-carrier-protein] and UDP-N-acetyl-alpha-D-glucosamine: step 2/6. Functionally, catalyzes the hydrolysis of UDP-3-O-myristoyl-N-acetylglucosamine to form UDP-3-O-myristoylglucosamine and acetate, the committed step in lipid A biosynthesis. This is UDP-3-O-acyl-N-acetylglucosamine deacetylase from Campylobacter lari (strain RM2100 / D67 / ATCC BAA-1060).